The following is a 473-amino-acid chain: Photosystem II CP43 reaction center protein (473 aa).

A propeptide spanning residues 1 to 14 (MKTLYSLRRYFHVE) is cleaved from the precursor. Residue Thr15 is modified to N-acetylthreonine. At Thr15 the chain carries Phosphothreonine. A run of 5 helical transmembrane segments spans residues 69-93 (LFEVAHFVPEKPMYEQGLILLPHLA), 134-155 (LIGPETLEESYPFFGYLWKDKN), 178-200 (KAMYFGGVYDTWAPGGGDVRVIS), 255-275 (KPFAWARRAFVWSGEAYLSYS), and 291-312 (WFNNTVYPSEFFGPTGPEASQA). A [CaMn4O5] cluster-binding site is contributed by Glu367. The helical transmembrane segment at 447-471 (RARAAAAGFEKGIDRDTEPVLSMRP) threads the bilayer.

This sequence belongs to the PsbB/PsbC family. PsbC subfamily. In terms of assembly, PSII is composed of 1 copy each of membrane proteins PsbA, PsbB, PsbC, PsbD, PsbE, PsbF, PsbH, PsbI, PsbJ, PsbK, PsbL, PsbM, PsbT, PsbX, PsbY, PsbZ, Psb30/Ycf12, at least 3 peripheral proteins of the oxygen-evolving complex and a large number of cofactors. It forms dimeric complexes. Binds multiple chlorophylls and provides some of the ligands for the Ca-4Mn-5O cluster of the oxygen-evolving complex. It may also provide a ligand for a Cl- that is required for oxygen evolution. PSII binds additional chlorophylls, carotenoids and specific lipids. serves as cofactor.

It localises to the plastid. The protein resides in the chloroplast thylakoid membrane. One of the components of the core complex of photosystem II (PSII). It binds chlorophyll and helps catalyze the primary light-induced photochemical processes of PSII. PSII is a light-driven water:plastoquinone oxidoreductase, using light energy to abstract electrons from H(2)O, generating O(2) and a proton gradient subsequently used for ATP formation. The polypeptide is Photosystem II CP43 reaction center protein (Ostreococcus tauri).